Here is a 275-residue protein sequence, read N- to C-terminus: Large ribosomal subunit protein uL2 (275 aa).

The disordered stretch occupies residues Ala224–Gly275.

The protein belongs to the universal ribosomal protein uL2 family. In terms of assembly, part of the 50S ribosomal subunit. Forms a bridge to the 30S subunit in the 70S ribosome.

Functionally, one of the primary rRNA binding proteins. Required for association of the 30S and 50S subunits to form the 70S ribosome, for tRNA binding and peptide bond formation. It has been suggested to have peptidyltransferase activity; this is somewhat controversial. Makes several contacts with the 16S rRNA in the 70S ribosome. The sequence is that of Large ribosomal subunit protein uL2 from Xanthomonas oryzae pv. oryzae (strain MAFF 311018).